A 644-amino-acid polypeptide reads, in one-letter code: Major core protein OPG129 (644 aa).

The propeptide occupies 1 to 61 (MEAVVNSDVF…IVDDDFISAG (61 aa)). The interval 60 to 81 (AGARNQRTKPKRTGNDQSQQPI) is disordered.

It belongs to the orthopoxvirus OPG129 family. Post-translationally, the 73-kDa precursor is cleaved to a mature protein of 60 kDa during virion maturation. Proteolytic cleavage of major core proteins OPG129, OPG136, and OPG098, which occurs at a late stage of core formation, is required for production of infectious mature virions (MV).

It is found in the virion. In terms of biological role, major component of the virion core that undergoes proteolytic processing during the immature virion (IV) to mature virion (MV) transition. Essential for the formation of a structurally normal core. The sequence is that of Major core protein OPG129 (OPG129) from Monkeypox virus.